We begin with the raw amino-acid sequence, 554 residues long: Acetyl-S-ACP:malonate ACP transferase (554 aa).

The protein resides in the cytoplasm. It catalyses the reaction acetyl-[ACP] + malonate = malonyl-[ACP] + acetate. Its function is as follows. Alpha subunit of the biotin-independent and biotin-dependent malonate decarboxylase multienzyme complex (EC 4.1.1.88 and EC 7.2.4.4, respectively). Acts as an acyl-carrier protein (ACP) transferase component. This first step in malonate decarboxylation involves the exchange of an acetyl thioester residue bound to the activated ACP subunit for a malonyl thioester residue. Has a weak activity with acetyl-CoA as substrate. The protein is Acetyl-S-ACP:malonate ACP transferase (madA) of Malonomonas rubra.